The primary structure comprises 760 residues: Probable myosin-binding protein 4 (760 aa).

The chain crosses the membrane as a helical span at residues 26–46 (WFLILLMFIDALLSYLLVWFA). 4 disordered regions span residues 161–189 (SRGR…SLKK), 247–273 (SEKR…QPVL), 292–311 (SMLG…VKAK), and 348–595 (EAEV…KHSA). The segment covering 352-366 (SGSSSPSGGEFLSPS) has biased composition (low complexity). The span at 371-383 (ASREIRIQEHDDS) shows a compositional bias: basic and acidic residues. Over residues 385–394 (DFSQNITSSA) the composition is skewed to polar residues. Residues 388–416 (QNITSSAMEIEEFEAAIEQKESDHMDVSG) adopt a coiled-coil conformation. Basic and acidic residues predominate over residues 404-413 (IEQKESDHMD). Composition is skewed to acidic residues over residues 446-458 (LEQE…ESEV) and 517-526 (EEDVDNEESE). 2 stretches are compositionally biased toward basic and acidic residues: residues 537-550 (VKEE…HGDH) and 562-580 (SKEE…KITE). Residues 611 to 709 (SLVEVLKQQL…DLEMELEYYR (99 aa)) form the GTD-binding domain. The tract at residues 725–760 (GILGNTEETNVTSPTDETSIKDSTDTKLTGSPSAEN) is disordered. 2 stretches are compositionally biased toward polar residues: residues 730-741 (TEETNVTSPTDE) and 750-760 (TKLTGSPSAEN).

It is found in the endomembrane system. In terms of biological role, membrane-anchored myosin receptors that define a distinct, plant-specific transport vesicle compartment. This Arabidopsis thaliana (Mouse-ear cress) protein is Probable myosin-binding protein 4.